A 428-amino-acid chain; its full sequence is Glutamate-1-semialdehyde 2,1-aminomutase (428 aa).

Residue lysine 265 is modified to N6-(pyridoxal phosphate)lysine.

This sequence belongs to the class-III pyridoxal-phosphate-dependent aminotransferase family. HemL subfamily. In terms of assembly, homodimer. The cofactor is pyridoxal 5'-phosphate.

It is found in the cytoplasm. The catalysed reaction is (S)-4-amino-5-oxopentanoate = 5-aminolevulinate. The protein operates within porphyrin-containing compound metabolism; protoporphyrin-IX biosynthesis; 5-aminolevulinate from L-glutamyl-tRNA(Glu): step 2/2. This Proteus mirabilis (strain HI4320) protein is Glutamate-1-semialdehyde 2,1-aminomutase.